Reading from the N-terminus, the 470-residue chain is Trigger factor (470 aa).

The PPIase FKBP-type domain maps to 164–243 (GDYVVIDMTA…VTAVKVQELP (80 aa)). Acidic residues-rich tracts occupy residues 424 to 438 (ETDAEDAAEGVESVE) and 445 to 470 (AEDDAEETSDEPAAEDTATEDEAAKA). The interval 424–470 (ETDAEDAAEGVESVEVDLSAAAEDDAEETSDEPAAEDTATEDEAAKA) is disordered.

This sequence belongs to the FKBP-type PPIase family. Tig subfamily.

Its subcellular location is the cytoplasm. The enzyme catalyses [protein]-peptidylproline (omega=180) = [protein]-peptidylproline (omega=0). Its function is as follows. Involved in protein export. Acts as a chaperone by maintaining the newly synthesized protein in an open conformation. Functions as a peptidyl-prolyl cis-trans isomerase. In Beutenbergia cavernae (strain ATCC BAA-8 / DSM 12333 / CCUG 43141 / JCM 11478 / NBRC 16432 / NCIMB 13614 / HKI 0122), this protein is Trigger factor.